The primary structure comprises 181 residues: Mating-type protein A1 (181 aa).

The homeobox DNA-binding region spans 122–181 (DKKKRRHIPESSKELLEKAFKVKRFPNSKERERIARECGISPLQVRVWFTNKRARSKSRA).

The protein belongs to the MATA1 family.

It localises to the nucleus. Its function is as follows. Mating type proteins are sequence specific DNA-binding proteins that act as master switches in yeast differentiation by controlling gene expression in a cell type-specific fashion. This is Mating-type protein A1 (MATA1) from Pichia angusta (Yeast).